A 292-amino-acid polypeptide reads, in one-letter code: Ribosomal protein L11 methyltransferase (292 aa).

Residues Thr145, Gly166, Asp188, and Asn229 each coordinate S-adenosyl-L-methionine.

The protein belongs to the methyltransferase superfamily. PrmA family.

The protein localises to the cytoplasm. The catalysed reaction is L-lysyl-[protein] + 3 S-adenosyl-L-methionine = N(6),N(6),N(6)-trimethyl-L-lysyl-[protein] + 3 S-adenosyl-L-homocysteine + 3 H(+). In terms of biological role, methylates ribosomal protein L11. This chain is Ribosomal protein L11 methyltransferase, found in Nitrosococcus oceani (strain ATCC 19707 / BCRC 17464 / JCM 30415 / NCIMB 11848 / C-107).